The sequence spans 1081 residues: Teashirt homolog 3 (1081 aa).

Disordered stretches follow at residues 25–104 (LVED…EVQV), 141–161 (PSSE…SSCG), and 238–257 (HYRD…WSKP). Positions 26-37 (VEDDVEPEEQAA) are enriched in acidic residues. The span at 68 to 87 (SSHEMDSESHISETSDRMAD) shows a compositional bias: basic and acidic residues. 2 C2H2-type zinc fingers span residues 214–238 (FRCK…ETGH) and 275–299 (LKCM…KTKH). The span at 238–247 (HYRDDNHETD) shows a compositional bias: basic and acidic residues. The interval 325-346 (SLELELPSSPDSTGGTPKATLS) is disordered. Residues 387 to 410 (KCMECGSSHDTLQELTAHMMVTGH) form a C2H2-type 3; atypical zinc finger. The segment covering 474–491 (VDKEKAVPDEKPKEREKP) has biased composition (basic and acidic residues). Disordered stretches follow at residues 474 to 499 (VDKE…EKYD), 626 to 699 (EKMK…KPLS), 792 to 824 (LTKG…TVTT), and 855 to 897 (TESH…RQSN). Positions 606 to 630 (NFHAMEELVKKVTEKVAKVEEKMKE) form a coiled coil. The span at 660–670 (SDGSFKSQENS) shows a compositional bias: polar residues. Serine 682 carries the post-translational modification Phosphoserine. 2 stretches are compositionally biased toward low complexity: residues 800–824 (GCSL…TVTT) and 856–869 (ESHT…SSIS). The segment at residues 891–961 (RKGRQSNWNP…NVKYQLRRTG (71 aa)) is a DNA-binding region (homeobox; atypical). C2H2-type zinc fingers lie at residues 976-998 (FFCN…LESH) and 1041-1064 (YQCK…SKTH).

The protein belongs to the teashirt C2H2-type zinc-finger protein family. Interacts (via N-terminus) with HDAC1 and HDAC2; the interaction is direct. Found in a trimeric complex with APBB1 and HDAC1; the interaction between HDAC1 and APBB1 is mediated by TSHZ3. Interacts (via homeobox domain) with APBB1 (via PID domain 1). As to expression, expressed in corticostriatal neurons.

Its subcellular location is the nucleus. It localises to the cell projection. The protein localises to the growth cone. Its function is as follows. Transcriptional regulator involved in developmental processes. Functions in association with APBB1, SET and HDAC factors as a transcriptional repressor, that inhibits the expression of CASP4. TSHZ3-mediated transcription repression involves the recruitment of histone deacetylases HDAC1 and HDAC2. Associates with chromatin in a region surrounding the CASP4 transcriptional start site(s). Regulates the development of neurons involved in both respiratory rhythm and airflow control. Promotes maintenance of nucleus ambiguus (nA) motoneurons, which govern upper airway function, and establishes a respiratory rhythm generator (RRG) activity compatible with survival at birth. Involved in the differentiation of the proximal uretic smooth muscle cells during developmental processes. Involved in the up-regulation of myocardin, that directs the expression of smooth muscle cells in the proximal ureter. Involved in the modulation of glutamatergic synaptic transmission and long-term synaptic potentiation. The polypeptide is Teashirt homolog 3 (Tshz3) (Mus musculus (Mouse)).